Reading from the N-terminus, the 308-residue chain is GTPase Era (308 aa).

One can recognise an Era-type G domain in the interval 14 to 181 (RCGFVALIGA…RSTLAEMVPP (168 aa)). The segment at 22 to 29 (GAPNVGKS) is G1. 22–29 (GAPNVGKS) lines the GTP pocket. A G2 region spans residues 48-52 (QTTRA). Residues 69–72 (DTPG) are G3. Residues 69 to 73 (DTPGI) and 131 to 134 (NKVD) contribute to the GTP site. The tract at residues 131-134 (NKVD) is G4. A G5 region spans residues 160-162 (IAA). The region spanning 212–289 (LHQELPYQST…HLFLFVKVRE (78 aa)) is the KH type-2 domain.

The protein belongs to the TRAFAC class TrmE-Era-EngA-EngB-Septin-like GTPase superfamily. Era GTPase family. In terms of assembly, monomer.

The protein localises to the cytoplasm. Its subcellular location is the cell inner membrane. Functionally, an essential GTPase that binds both GDP and GTP, with rapid nucleotide exchange. Plays a role in 16S rRNA processing and 30S ribosomal subunit biogenesis and possibly also in cell cycle regulation and energy metabolism. The protein is GTPase Era of Bradyrhizobium diazoefficiens (strain JCM 10833 / BCRC 13528 / IAM 13628 / NBRC 14792 / USDA 110).